Consider the following 335-residue polypeptide: Proline racemase (335 aa).

C91 functions as the Proton acceptor in the catalytic mechanism. C255 (proton donor) is an active-site residue.

The protein belongs to the proline racemase family. Homodimer.

It carries out the reaction L-proline = D-proline. In terms of biological role, catalyzes the reversible interconversion of L- and D-proline. Plays an important role in the regulation of intra- and extracellular amino acid pools, allowing the bacterium to profit from host precursors and enzymatic pathways. Strong B-cell mitogen. This is Proline racemase from Clostridioides difficile (strain 630) (Peptoclostridium difficile).